A 482-amino-acid chain; its full sequence is Chromosomal replication initiator protein DnaA (482 aa).

The tract at residues methionine 1 to glutamate 71 is domain I, interacts with DnaA modulators. The interval glutamate 71–serine 139 is domain II. The tract at residues proline 140–arginine 362 is domain III, AAA+ region. 4 residues coordinate ATP: glycine 186, glycine 188, lysine 189, and threonine 190. A domain IV, binds dsDNA region spans residues serine 363–glutamate 482.

The protein belongs to the DnaA family. In terms of assembly, oligomerizes as a right-handed, spiral filament on DNA at oriC.

Its subcellular location is the cytoplasm. In terms of biological role, plays an essential role in the initiation and regulation of chromosomal replication. ATP-DnaA binds to the origin of replication (oriC) to initiate formation of the DNA replication initiation complex once per cell cycle. Binds the DnaA box (a 9 base pair repeat at the origin) and separates the double-stranded (ds)DNA. Forms a right-handed helical filament on oriC DNA; dsDNA binds to the exterior of the filament while single-stranded (ss)DNA is stabiized in the filament's interior. The ATP-DnaA-oriC complex binds and stabilizes one strand of the AT-rich DNA unwinding element (DUE), permitting loading of DNA polymerase. After initiation quickly degrades to an ADP-DnaA complex that is not apt for DNA replication. Binds acidic phospholipids. In Rhizobium johnstonii (strain DSM 114642 / LMG 32736 / 3841) (Rhizobium leguminosarum bv. viciae), this protein is Chromosomal replication initiator protein DnaA.